A 525-amino-acid chain; its full sequence is Protein-serine O-palmitoleoyltransferase porcupine (525 aa).

The next 9 membrane-spanning stretches (helical) occupy residues V83 to L103, L125 to V145, G159 to W179, F220 to F240, L260 to A280, V301 to A318, S395 to A415, N467 to G487, and Q505 to S525. H398 is a catalytic residue.

It belongs to the membrane-bound acyltransferase family. Porcupine subfamily. Interacts with wg and Wnt5.

Its subcellular location is the endoplasmic reticulum membrane. It catalyses the reaction [Wnt protein]-L-serine + (9Z)-hexadecenoyl-CoA = [Wnt protein]-O-(9Z)-hexadecenoyl-L-serine + CoA. Its function is as follows. Protein-serine O-palmitoleoyltransferase that acts as a key regulator of the Wnt signaling pathway by mediating the attachment of palmitoleate, a 16-carbon monounsaturated fatty acid (C16:1(9Z)), to Wnt proteins. Serine palmitoleoylation of Wnt proteins is required for efficient binding to frizzled receptors. Also facilitates the glycosylation of Wnt family members, including wg and Wnt5. The cotranslational disulfide bond formation of wg competes with the N-glycosylation. Porc stimulates the post-translational N-glycosylation by anchoring wg at the ER membrane, probably through acylation. This chain is Protein-serine O-palmitoleoyltransferase porcupine, found in Drosophila melanogaster (Fruit fly).